The following is a 181-amino-acid chain: Crossover junction endodeoxyribonuclease RuvC (181 aa).

Catalysis depends on residues aspartate 7, glutamate 67, and aspartate 139. Residues aspartate 7, glutamate 67, and aspartate 139 each coordinate Mg(2+).

Belongs to the RuvC family. In terms of assembly, homodimer which binds Holliday junction (HJ) DNA. The HJ becomes 2-fold symmetrical on binding to RuvC with unstacked arms; it has a different conformation from HJ DNA in complex with RuvA. In the full resolvosome a probable DNA-RuvA(4)-RuvB(12)-RuvC(2) complex forms which resolves the HJ. Requires Mg(2+) as cofactor.

The protein localises to the cytoplasm. The enzyme catalyses Endonucleolytic cleavage at a junction such as a reciprocal single-stranded crossover between two homologous DNA duplexes (Holliday junction).. The RuvA-RuvB-RuvC complex processes Holliday junction (HJ) DNA during genetic recombination and DNA repair. Endonuclease that resolves HJ intermediates. Cleaves cruciform DNA by making single-stranded nicks across the HJ at symmetrical positions within the homologous arms, yielding a 5'-phosphate and a 3'-hydroxyl group; requires a central core of homology in the junction. The consensus cleavage sequence is 5'-(A/T)TT(C/G)-3'. Cleavage occurs on the 3'-side of the TT dinucleotide at the point of strand exchange. HJ branch migration catalyzed by RuvA-RuvB allows RuvC to scan DNA until it finds its consensus sequence, where it cleaves and resolves the cruciform DNA. This Cupriavidus pinatubonensis (strain JMP 134 / LMG 1197) (Cupriavidus necator (strain JMP 134)) protein is Crossover junction endodeoxyribonuclease RuvC.